The sequence spans 397 residues: NADH-quinone oxidoreductase subunit H (397 aa).

9 helical membrane passes run 7–27 (ALLI…TAFA), 78–98 (LVYT…FGGI), 120–140 (ILAL…GGWA), 164–184 (MGLS…LDIV), 195–215 (WLIL…FAEV), 247–267 (MAEY…FFGG), 283–303 (SWPL…FIWV), 322–342 (LTLP…AFVP), and 353–373 (WLLG…SDAV).

The protein belongs to the complex I subunit 1 family. NDH-1 is composed of 15 different subunits. Subunits NuoA, H, J, K, L, M, N constitute the membrane sector of the complex.

The protein resides in the cell membrane. It catalyses the reaction a quinone + NADH + 5 H(+)(in) = a quinol + NAD(+) + 4 H(+)(out). Functionally, NDH-1 shuttles electrons from NADH, via FMN and iron-sulfur (Fe-S) centers, to quinones in the respiratory chain. The immediate electron acceptor for the enzyme in this species is believed to be ubiquinone. Couples the redox reaction to proton translocation (for every two electrons transferred, four hydrogen ions are translocated across the cytoplasmic membrane), and thus conserves the redox energy in a proton gradient. This subunit may bind ubiquinone. The protein is NADH-quinone oxidoreductase subunit H of Deinococcus radiodurans (strain ATCC 13939 / DSM 20539 / JCM 16871 / CCUG 27074 / LMG 4051 / NBRC 15346 / NCIMB 9279 / VKM B-1422 / R1).